The sequence spans 368 residues: Polymerase delta-interacting protein 2 (368 aa).

Residues 1–51 (MAACTARRALAVGSRWWSRSLTGARWPRPLCAAAGAGAFSPASTTTTRRHL) constitute a mitochondrion transit peptide. The 126-residue stretch at 235 to 360 (RETTENIRVT…FSLESNKDEK (126 aa)) folds into the ApaG domain. T292 bears the Phosphothreonine mark.

In terms of assembly, interacts with PCNA and POLD2. Interacts with SSBP1. Interacts with PRIMPOL; leading to enhance DNA polymerase activity of PRIMPOL. Interacts with POLH. Interacts with POLD1; leading to stimulate DNA polymerase activity of POLD1.

The protein resides in the mitochondrion matrix. It is found in the nucleus. Its function is as follows. Involved in DNA damage tolerance by regulating translesion synthesis (TLS) of templates carrying DNA damage lesions such as 8oxoG and abasic sites. May act by stimulating activity of DNA polymerases involved in TLS, such as PRIMPOL and polymerase delta (POLD1). This Homo sapiens (Human) protein is Polymerase delta-interacting protein 2.